We begin with the raw amino-acid sequence, 455 residues long: Zinc finger protein ZPR1 homolog (455 aa).

C4-type zinc fingers lie at residues 28–60 (CPVC…CPHC) and 247–279 (CPNC…CDRC).

The protein belongs to the ZPR1 family.

It localises to the nucleus. This chain is Zinc finger protein ZPR1 homolog, found in Caenorhabditis elegans.